The following is a 699-amino-acid chain: Probable xyloglucan glycosyltransferase 12 (699 aa).

The next 2 membrane-spanning stretches (helical) occupy residues 126 to 146 (CLKV…AAYF) and 194 to 214 (IVLF…CFWI). Asp280 is a catalytic residue. 2 residues coordinate substrate: Asp339 and Asp341. The active site involves Asp433. Transmembrane regions (helical) follow at residues 511-531 (LILP…TMFV) and 536-556 (LPAW…ILPA). The interval 616–646 (EKTTKHQRGVSAPETEAEKKAEKTKRKKKKH) is disordered. Residues Lys617 and Lys620 each participate in a glycyl lysine isopeptide (Lys-Gly) (interchain with G-Cter in ubiquitin) cross-link. Ser626 is modified (phosphoserine). Positions 637 to 646 (EKTKRKKKKH) are enriched in basic residues. Helical transmembrane passes span 649–668 (IYMK…TRSL) and 674–694 (IHFY…LDLI).

This sequence belongs to the glycosyltransferase 2 family. Plant cellulose synthase-like C subfamily. Homodimer. Mainly expressed in roots, flowers and seeds, and, at very low levels, in seedlings, leaves and stems.

It is found in the golgi apparatus membrane. In terms of biological role, probable beta-1,4-glucan synthase rather involved in the synthesis of the xyloglucan backbone than cellulose. Seems to work simultaneously with xyloglucan 6-xylosyltransferase. Xyloglucan is a noncellulosic polysaccharides of plant cell wall and consists of a glucan backbone substituted by xylose, galactose and fucose. This Arabidopsis thaliana (Mouse-ear cress) protein is Probable xyloglucan glycosyltransferase 12.